A 239-amino-acid chain; its full sequence is DNA repair protein RecO (239 aa).

It belongs to the RecO family.

Its function is as follows. Involved in DNA repair and RecF pathway recombination. The protein is DNA repair protein RecO of Aromatoleum aromaticum (strain DSM 19018 / LMG 30748 / EbN1) (Azoarcus sp. (strain EbN1)).